We begin with the raw amino-acid sequence, 567 residues long: Synaptotagmin-like protein 1 (567 aa).

The 57-residue stretch at 31–87 (LLDLSFLTEEEQEAISDVLKRDAHLRQLEEGRVSKLRASLEDPWQLKILTGDWFQEA) folds into the RabBD domain. Positions 103-255 (RASIRRKKSP…VSSLNSSTLS (153 aa)) are disordered. Residue Ser120 is modified to Phosphoserine. Acidic residues-rich tracts occupy residues 122-135 (GEAE…IEGE) and 170-184 (GQEE…ELEA). A compositionally biased stretch (polar residues) spans 208-219 (ESQPTPAQSKAT). Residue Ser220 is modified to Phosphoserine. Positions 235-255 (SLDRMLSSSSSVSSLNSSTLS) are enriched in low complexity. C2 domains are found at residues 271–390 (VRGS…WLPL) and 403–532 (SRGL…VPWM).

In terms of assembly, monomer. Binds NCF2 and NRXN1. Binds RAB27A that has been activated by GTP-binding via its N-terminus. In terms of tissue distribution, highly expressed in lung. Detected at lower levels in spleen, liver and kidney, and at very low levels in heart, brain and skeletal muscle. Expressed in cytotoxic T-lymphocytes (CTL).

The protein resides in the endomembrane system. Its subcellular location is the cell membrane. Functionally, binds phosphatidylinositol 3,4,5-trisphosphate. May play a role in vesicle trafficking. Acts as a RAB27A effector protein and may play a role in cytotoxic granule exocytosis in lymphocytes. The chain is Synaptotagmin-like protein 1 (Sytl1) from Mus musculus (Mouse).